A 156-amino-acid polypeptide reads, in one-letter code: Large ribosomal subunit protein uL22c (156 aa).

Belongs to the universal ribosomal protein uL22 family. As to quaternary structure, part of the 50S ribosomal subunit.

It localises to the plastid. Its subcellular location is the chloroplast. Its function is as follows. This protein binds specifically to 23S rRNA. Functionally, the globular domain of the protein is located near the polypeptide exit tunnel on the outside of the subunit, while an extended beta-hairpin is found that lines the wall of the exit tunnel in the center of the 70S ribosome. The chain is Large ribosomal subunit protein uL22c (rpl22) from Buxus microphylla (Littleleaf boxwood).